Consider the following 316-residue polypeptide: tRNA dimethylallyltransferase (316 aa).

17-24 (GPTASGKT) is an ATP binding site. A substrate-binding site is contributed by 19 to 24 (TASGKT). Interaction with substrate tRNA stretches follow at residues 42-45 (DSVL), 166-170 (QRLSR), 247-252 (RCVGYR), and 280-287 (KRQITWLR).

It belongs to the IPP transferase family. In terms of assembly, monomer. Mg(2+) is required as a cofactor.

The catalysed reaction is adenosine(37) in tRNA + dimethylallyl diphosphate = N(6)-dimethylallyladenosine(37) in tRNA + diphosphate. In terms of biological role, catalyzes the transfer of a dimethylallyl group onto the adenine at position 37 in tRNAs that read codons beginning with uridine, leading to the formation of N6-(dimethylallyl)adenosine (i(6)A). The polypeptide is tRNA dimethylallyltransferase (Shigella flexneri).